Reading from the N-terminus, the 585-residue chain is uncharacterized protein (585 aa).

The segment covering 1-18 has biased composition (polar residues); it reads MSALSTKLEPTNSYSESL. Residues 1–23 form a disordered region; sequence MSALSTKLEPTNSYSESLPPQRR.

The protein belongs to the protein kinase superfamily. ADCK protein kinase family.

This is an uncharacterized protein from Synechocystis sp. (strain ATCC 27184 / PCC 6803 / Kazusa).